Consider the following 104-residue polypeptide: MLETLYKEALDRKNNPKEGSYTNYLFDKGLDKILKKVGEEATEVVIGAKNADKTEIANETADVLYHLAVMLVETGVSPEDVEAVLRARQGKQSNVHDRKEVTDY.

The protein belongs to the PRA-PH family.

The protein localises to the cytoplasm. It carries out the reaction 1-(5-phospho-beta-D-ribosyl)-ATP + H2O = 1-(5-phospho-beta-D-ribosyl)-5'-AMP + diphosphate + H(+). It functions in the pathway amino-acid biosynthesis; L-histidine biosynthesis; L-histidine from 5-phospho-alpha-D-ribose 1-diphosphate: step 2/9. This is Phosphoribosyl-ATP pyrophosphatase from Streptococcus thermophilus (strain ATCC BAA-491 / LMD-9).